Reading from the N-terminus, the 159-residue chain is 17 kDa surface antigen (159 aa).

The N-terminal stretch at 1-19 (MKIISKIIVILLAASMLQA) is a signal peptide. Residue Cys20 is the site of N-palmitoyl cysteine attachment. The S-diacylglycerol cysteine moiety is linked to residue Cys20.

It belongs to the rickettsiale 17 kDa surface antigen family.

Its subcellular location is the cell outer membrane. This chain is 17 kDa surface antigen (omp), found in Rickettsia bellii.